Here is a 465-residue protein sequence, read N- to C-terminus: Beta-1,2-xylosyltransferase XYXT1 (465 aa).

Over 1-11 (MKAAVRSKKSK) the chain is Cytoplasmic. Residues 12–32 (GSFCHPPLLLLIVAIQFLVIY) form a helical; Signal-anchor for type II membrane protein membrane-spanning segment. Over 33–465 (SPTLDQYMVM…VLLKALHLLR (433 aa)) the chain is Lumenal. N-linked (GlcNAc...) asparagine glycosylation is found at Asn80, Asn118, Asn125, Asn266, and Asn403.

The protein belongs to the glycosyltransferase 61 family. Widely expressed.

The protein localises to the golgi apparatus membrane. The protein operates within glycan metabolism. In terms of biological role, glycosyltransferase involved in the xylosylation of xylan, the major hemicellulose (non-cellulosic component) of primary and secondary walls of angiosperms. Possesses beta-1,2-xylosyltransferase activity, transferring xylose from UDP-xylose to the xylan backbone. Catalyzes the addition of 2-O-xylosyl side chains to the xylan backbone. The chain is Beta-1,2-xylosyltransferase XYXT1 from Oryza sativa subsp. japonica (Rice).